A 453-amino-acid chain; its full sequence is Serine--tRNA ligase (453 aa).

252-254 (TAE) is a binding site for L-serine. ATP contacts are provided by residues 283 to 285 (RKE) and valine 299. Residue glutamate 306 participates in L-serine binding. 370–373 (EMVS) lines the ATP pocket. Threonine 405 lines the L-serine pocket.

This sequence belongs to the class-II aminoacyl-tRNA synthetase family. Type-1 seryl-tRNA synthetase subfamily. In terms of assembly, homodimer. The tRNA molecule binds across the dimer.

Its subcellular location is the cytoplasm. It carries out the reaction tRNA(Ser) + L-serine + ATP = L-seryl-tRNA(Ser) + AMP + diphosphate + H(+). The catalysed reaction is tRNA(Sec) + L-serine + ATP = L-seryl-tRNA(Sec) + AMP + diphosphate + H(+). Its pathway is aminoacyl-tRNA biosynthesis; selenocysteinyl-tRNA(Sec) biosynthesis; L-seryl-tRNA(Sec) from L-serine and tRNA(Sec): step 1/1. Catalyzes the attachment of serine to tRNA(Ser). Is also able to aminoacylate tRNA(Sec) with serine, to form the misacylated tRNA L-seryl-tRNA(Sec), which will be further converted into selenocysteinyl-tRNA(Sec). The sequence is that of Serine--tRNA ligase from Sulfurisphaera tokodaii (strain DSM 16993 / JCM 10545 / NBRC 100140 / 7) (Sulfolobus tokodaii).